The following is a 280-amino-acid chain: MNDLMRDLAPISAKAWAEIETEARGTLTVTLAARKVVDFKGPLGWDASSVSLGRTEALAEEPKAAGSAAVVTVRKRAVQPLIELCVPFTLKRAELEAIARGASDADLDPVIEAARAIAIAEDRAVFHGFAAGGITGIGEASAEHALDLPADLADFPGVLVRALAVLRDRGVDGPYALVLGRTVYQQLMETTTPGGYPVLQHVRRLFEGPLIWAPGVDGAMLISQRGGDFELTVGRDFSIGYHDHDAQSVHLYLQESMTFRCLGPEAAVPLRGLSQAATKA.

The protein belongs to the encapsulin family. Family 1 subfamily. As to quaternary structure, this encapsulin nanocompartment is formed by 60 subunits; monomers form pentamers which assemble to form shells. There are 12 pores where the pentamers meet as well as 3-fold axis channels and dimer channels; none are larger than 3-4 Angstroms in diameter. The N-terminus of the protein is inside the shell, the C-terminus is outside.

It is found in the encapsulin nanocompartment. Its function is as follows. Shell component of a type 1 encapsulin nanocompartment. Assembles into proteinaceous icosahedral shells 24 nm in diameter in the presence and absence of its ferritin cargo protein. The center of cargo-loaded nanocompartments is loaded with iron. The empty encapsulin nanocompartment sequesters about 2200 Fe ions while the cargo-loaded nanocompartment can maximally sequester about 4150 Fe ions. Does not have any detectable ferroxidase activity. This Rhodospirillum rubrum (strain ATCC 11170 / ATH 1.1.1 / DSM 467 / LMG 4362 / NCIMB 8255 / S1) protein is Type 1 encapsulin shell protein.